We begin with the raw amino-acid sequence, 369 residues long: tRNA/tmRNA (uracil-C(5))-methyltransferase (369 aa).

Glutamine 190, tyrosine 218, asparagine 223, glutamate 239, and aspartate 301 together coordinate S-adenosyl-L-methionine. Residue cysteine 326 is the Nucleophile of the active site. The active-site Proton acceptor is glutamate 360.

Belongs to the class I-like SAM-binding methyltransferase superfamily. RNA M5U methyltransferase family. TrmA subfamily.

It carries out the reaction uridine(54) in tRNA + S-adenosyl-L-methionine = 5-methyluridine(54) in tRNA + S-adenosyl-L-homocysteine + H(+). The catalysed reaction is uridine(341) in tmRNA + S-adenosyl-L-methionine = 5-methyluridine(341) in tmRNA + S-adenosyl-L-homocysteine + H(+). Its function is as follows. Dual-specificity methyltransferase that catalyzes the formation of 5-methyluridine at position 54 (m5U54) in all tRNAs, and that of position 341 (m5U341) in tmRNA (transfer-mRNA). This Vibrio vulnificus (strain CMCP6) protein is tRNA/tmRNA (uracil-C(5))-methyltransferase.